The primary structure comprises 245 residues: Eukaryotic translation initiation factor 6-2 (245 aa).

Belongs to the eIF-6 family. As to quaternary structure, monomer. Associates with the 60S ribosomal subunit.

The protein localises to the cytoplasm. The protein resides in the nucleus. It localises to the nucleolus. Its function is as follows. Binds to the 60S ribosomal subunit and prevents its association with the 40S ribosomal subunit to form the 80S initiation complex in the cytoplasm. May also be involved in ribosome biogenesis. This Arabidopsis thaliana (Mouse-ear cress) protein is Eukaryotic translation initiation factor 6-2.